A 160-amino-acid chain; its full sequence is Cathelin-related peptide SC5 (160 aa).

The N-terminal stretch at 1–29 is a signal peptide; that stretch reads METQRASLSLGRCSLWLLLLGLALPSASA. Residues 30–131 constitute a propeptide that is removed on maturation; it reads QVLSYREAVL…DITCAEPQSV (102 aa). 2 disulfide bridges follow: cysteine 86-cysteine 97 and cysteine 108-cysteine 125.

It belongs to the cathelicidin family.

Its subcellular location is the secreted. Broad spectrum bactericidal agent. The polypeptide is Cathelin-related peptide SC5 (Ovis aries (Sheep)).